The following is a 338-amino-acid chain: DNA-directed RNA polymerase subunit alpha (338 aa).

The segment at 1–234 (MIQKNWQELI…DQLQLFINFE (234 aa)) is alpha N-terminal domain (alpha-NTD). Residues 250 to 338 (FNKNLLRKVD…ELAKKLEEPY (89 aa)) are alpha C-terminal domain (alpha-CTD).

The protein belongs to the RNA polymerase alpha chain family. As to quaternary structure, homodimer. The RNAP catalytic core consists of 2 alpha, 1 beta, 1 beta' and 1 omega subunit. When a sigma factor is associated with the core the holoenzyme is formed, which can initiate transcription.

The catalysed reaction is RNA(n) + a ribonucleoside 5'-triphosphate = RNA(n+1) + diphosphate. Functionally, DNA-dependent RNA polymerase catalyzes the transcription of DNA into RNA using the four ribonucleoside triphosphates as substrates. In Paramagnetospirillum magneticum (strain ATCC 700264 / AMB-1) (Magnetospirillum magneticum), this protein is DNA-directed RNA polymerase subunit alpha.